We begin with the raw amino-acid sequence, 153 residues long: Phosphoribosyl-AMP cyclohydrolase (153 aa).

Residue Asp93 participates in Mg(2+) binding. Cys94 contacts Zn(2+). Mg(2+) is bound by residues Asp95 and Asp97. The Zn(2+) site is built by Cys112 and Cys119.

Belongs to the PRA-CH family. As to quaternary structure, homodimer. Mg(2+) is required as a cofactor. Requires Zn(2+) as cofactor.

The protein resides in the cytoplasm. It carries out the reaction 1-(5-phospho-beta-D-ribosyl)-5'-AMP + H2O = 1-(5-phospho-beta-D-ribosyl)-5-[(5-phospho-beta-D-ribosylamino)methylideneamino]imidazole-4-carboxamide. Its pathway is amino-acid biosynthesis; L-histidine biosynthesis; L-histidine from 5-phospho-alpha-D-ribose 1-diphosphate: step 3/9. Catalyzes the hydrolysis of the adenine ring of phosphoribosyl-AMP. This is Phosphoribosyl-AMP cyclohydrolase from Mesorhizobium japonicum (strain LMG 29417 / CECT 9101 / MAFF 303099) (Mesorhizobium loti (strain MAFF 303099)).